The primary structure comprises 140 residues: Probable transport accessory protein MmpS4 (140 aa).

A helical transmembrane segment spans residues 2–22; that stretch reads LMRTWIPLVILVVVIVGGFTV.

Belongs to the MmpS family.

It localises to the cell membrane. The sequence is that of Probable transport accessory protein MmpS4 (mmpS4) from Mycobacterium bovis (strain ATCC BAA-935 / AF2122/97).